Consider the following 193-residue polypeptide: Probable GTP-binding protein EngB (193 aa).

In terms of domain architecture, EngB-type G spans 22–193; the sequence is ALPEFALAGR…EAWAALERFL (172 aa). Residues 30-37, 57-61, 75-78, 142-145, and 174-176 each bind GTP; these read GRSNVGKS, GKTQT, DVPG, TKAD, and FSA. S37 and T59 together coordinate Mg(2+).

It belongs to the TRAFAC class TrmE-Era-EngA-EngB-Septin-like GTPase superfamily. EngB GTPase family. The cofactor is Mg(2+).

Its function is as follows. Necessary for normal cell division and for the maintenance of normal septation. This chain is Probable GTP-binding protein EngB, found in Geobacillus sp. (strain WCH70).